A 255-amino-acid chain; its full sequence is Indole-3-glycerol phosphate synthase (255 aa).

It belongs to the TrpC family.

The enzyme catalyses 1-(2-carboxyphenylamino)-1-deoxy-D-ribulose 5-phosphate + H(+) = (1S,2R)-1-C-(indol-3-yl)glycerol 3-phosphate + CO2 + H2O. Its pathway is amino-acid biosynthesis; L-tryptophan biosynthesis; L-tryptophan from chorismate: step 4/5. This Streptococcus mutans serotype c (strain ATCC 700610 / UA159) protein is Indole-3-glycerol phosphate synthase.